The following is a 729-amino-acid chain: Phosphoribosylformylglycinamidine synthase subunit PurL (729 aa).

Residue histidine 54 is part of the active site. ATP is bound by residues tyrosine 57 and lysine 96. Glutamate 98 is a binding site for Mg(2+). Substrate contacts are provided by residues 99–102 (SHNH) and arginine 121. Residue histidine 100 is the Proton acceptor of the active site. Aspartate 122 lines the Mg(2+) pocket. A substrate-binding site is contributed by glutamine 245. Aspartate 273 is a binding site for Mg(2+). 317 to 319 (ETQ) contacts substrate. ATP contacts are provided by aspartate 495 and glycine 532. Asparagine 533 is a Mg(2+) binding site. Residue serine 535 coordinates substrate.

This sequence belongs to the FGAMS family. In terms of assembly, monomer. Part of the FGAM synthase complex composed of 1 PurL, 1 PurQ and 2 PurS subunits.

It is found in the cytoplasm. The catalysed reaction is N(2)-formyl-N(1)-(5-phospho-beta-D-ribosyl)glycinamide + L-glutamine + ATP + H2O = 2-formamido-N(1)-(5-O-phospho-beta-D-ribosyl)acetamidine + L-glutamate + ADP + phosphate + H(+). The protein operates within purine metabolism; IMP biosynthesis via de novo pathway; 5-amino-1-(5-phospho-D-ribosyl)imidazole from N(2)-formyl-N(1)-(5-phospho-D-ribosyl)glycinamide: step 1/2. Functionally, part of the phosphoribosylformylglycinamidine synthase complex involved in the purines biosynthetic pathway. Catalyzes the ATP-dependent conversion of formylglycinamide ribonucleotide (FGAR) and glutamine to yield formylglycinamidine ribonucleotide (FGAM) and glutamate. The FGAM synthase complex is composed of three subunits. PurQ produces an ammonia molecule by converting glutamine to glutamate. PurL transfers the ammonia molecule to FGAR to form FGAM in an ATP-dependent manner. PurS interacts with PurQ and PurL and is thought to assist in the transfer of the ammonia molecule from PurQ to PurL. This is Phosphoribosylformylglycinamidine synthase subunit PurL from Staphylococcus haemolyticus (strain JCSC1435).